A 30-amino-acid chain; its full sequence is Photosystem I reaction center subunit XII (30 aa).

The helical transmembrane segment at 7-29 (VYIALMAALLASVLAIRLGATLY) threads the bilayer.

It belongs to the PsaM family.

The protein resides in the plastid. It localises to the chloroplast thylakoid membrane. This Thalassiosira pseudonana (Marine diatom) protein is Photosystem I reaction center subunit XII.